The sequence spans 430 residues: Pre-mRNA-processing protein 45 (430 aa).

A compositionally biased stretch (polar residues) spans methionine 1–arginine 26. 3 disordered regions span residues methionine 1–serine 28, methionine 280–serine 299, and proline 370–serine 430.

The protein belongs to the SNW family. Associated with the spliceosome.

It is found in the nucleus. Functionally, involved in pre-mRNA splicing. In Kluyveromyces lactis (strain ATCC 8585 / CBS 2359 / DSM 70799 / NBRC 1267 / NRRL Y-1140 / WM37) (Yeast), this protein is Pre-mRNA-processing protein 45 (PRP45).